Reading from the N-terminus, the 203-residue chain is Large ribosomal subunit protein bL25 (203 aa).

The protein belongs to the bacterial ribosomal protein bL25 family. CTC subfamily. As to quaternary structure, part of the 50S ribosomal subunit; part of the 5S rRNA/L5/L18/L25 subcomplex. Contacts the 5S rRNA. Binds to the 5S rRNA independently of L5 and L18.

This is one of the proteins that binds to the 5S RNA in the ribosome where it forms part of the central protuberance. This chain is Large ribosomal subunit protein bL25, found in Rickettsia prowazekii (strain Madrid E).